Here is a 299-residue protein sequence, read N- to C-terminus: ATP phosphoribosyltransferase (299 aa).

Belongs to the ATP phosphoribosyltransferase family. Long subfamily. Mg(2+) serves as cofactor.

It is found in the cytoplasm. The catalysed reaction is 1-(5-phospho-beta-D-ribosyl)-ATP + diphosphate = 5-phospho-alpha-D-ribose 1-diphosphate + ATP. It functions in the pathway amino-acid biosynthesis; L-histidine biosynthesis; L-histidine from 5-phospho-alpha-D-ribose 1-diphosphate: step 1/9. Its activity is regulated as follows. Feedback inhibited by histidine. Functionally, catalyzes the condensation of ATP and 5-phosphoribose 1-diphosphate to form N'-(5'-phosphoribosyl)-ATP (PR-ATP). Has a crucial role in the pathway because the rate of histidine biosynthesis seems to be controlled primarily by regulation of HisG enzymatic activity. This chain is ATP phosphoribosyltransferase, found in Shewanella sp. (strain MR-7).